A 766-amino-acid chain; its full sequence is Phospholipid phosphatase-related protein type 4 (766 aa).

Serine 37 bears the Phosphoserine mark. The next 4 membrane-spanning stretches (helical) occupy residues 68–88 (LPCF…SLYF), 120–140 (AIPF…TIMV), 179–199 (FVGV…IIQL), and 248–268 (SFPS…SMYF). Asparagine 269 carries N-linked (GlcNAc...) asparagine glycosylation. Helical transmembrane passes span 277-297 (KLLK…CGLT) and 309-329 (VYCG…YAVG). A Phosphoserine modification is found at serine 347. Asparagine 363 carries N-linked (GlcNAc...) asparagine glycosylation. Serine 386 is subject to Phosphoserine. An N-linked (GlcNAc...) asparagine glycan is attached at asparagine 433. Residue serine 439 is modified to Phosphoserine. 2 disordered regions span residues 454–503 (SKNE…GNQY) and 510–529 (TVPG…IQSR). Asparagine 456 is a glycosylation site (N-linked (GlcNAc...) asparagine). A phosphoserine mark is found at serine 462 and serine 474. Residues asparagine 515 and asparagine 545 are each glycosylated (N-linked (GlcNAc...) asparagine). Serine 608 is modified (phosphoserine). 3 disordered regions span residues 634 to 654 (PIIQ…KWKA), 672 to 705 (DSES…GITT), and 741 to 766 (PERS…PYKD). Positions 688 to 702 (RKRKHIDSNEHHHHG) are enriched in basic residues. A compositionally biased stretch (polar residues) spans 743–752 (RSNSPENTRN).

It belongs to the PA-phosphatase related phosphoesterase family. In terms of processing, O-glycosylated. Probably at Ser-347. Specifically expressed in neurons (at protein level).

It localises to the postsynaptic density membrane. Functionally, postsynaptic density membrane protein that indirectly regulates glutamatergic synaptic transmission through lysophosphatidic acid (LPA)-mediated signaling pathways. Binds lysophosphatidic acid (LPA) and mediates its internalization into cells. Could act as receptor or a transporter of this lipid at the post-synaptic membrane. Modulates lysophosphatidic acid (LPA) activity in neuron axonal outgrowth during development by attenuating phospholipid-induced axon collapse. This Rattus norvegicus (Rat) protein is Phospholipid phosphatase-related protein type 4.